A 520-amino-acid polypeptide reads, in one-letter code: Cholesterol side-chain cleavage enzyme, mitochondrial (520 aa).

The transit peptide at 1 to 39 directs the protein to the mitochondrion; the sequence is MLVRGLPLRSVLVKGCQPLLSAPREGPGHPRVPTGEGAG. Residues 19–47 are disordered; the sequence is LLSAPREGPGHPRVPTGEGAGMSSHSPRP. Cysteine 461 provides a ligand contact to heme.

The protein belongs to the cytochrome P450 family. As to quaternary structure, interacts with FDX1/adrenodoxin. Heme serves as cofactor.

It is found in the mitochondrion inner membrane. It carries out the reaction 6 reduced [adrenodoxin] + cholesterol + 3 O2 + 6 H(+) = 4-methylpentanal + pregnenolone + 6 oxidized [adrenodoxin] + 4 H2O. It catalyses the reaction 2 reduced [adrenodoxin] + cholesterol + O2 + 2 H(+) = (22R)-hydroxycholesterol + 2 oxidized [adrenodoxin] + H2O. The enzyme catalyses (22R)-hydroxycholesterol + 2 reduced [adrenodoxin] + O2 + 2 H(+) = (20R,22R)-20,22-dihydroxycholesterol + 2 oxidized [adrenodoxin] + H2O. The catalysed reaction is (20R,22R)-20,22-dihydroxycholesterol + 2 reduced [adrenodoxin] + O2 + 2 H(+) = 4-methylpentanal + pregnenolone + 2 oxidized [adrenodoxin] + 2 H2O. Its pathway is lipid metabolism; C21-steroid hormone metabolism. The protein operates within steroid metabolism; cholesterol metabolism. Its function is as follows. A cytochrome P450 monooxygenase that catalyzes the side-chain hydroxylation and cleavage of cholesterol to pregnenolone, the precursor of most steroid hormones. Catalyzes three sequential oxidation reactions of cholesterol, namely the hydroxylation at C22 followed with the hydroxylation at C20 to yield 20R,22R-hydroxycholesterol that is further cleaved between C20 and C22 to yield the C21-steroid pregnenolone and 4-methylpentanal. Mechanistically, uses molecular oxygen inserting one oxygen atom into a substrate and reducing the second into a water molecule. Two electrons are provided by NADPH via a two-protein mitochondrial transfer system comprising flavoprotein FDXR (adrenodoxin/ferredoxin reductase) and nonheme iron-sulfur protein FDX1 or FDX2 (adrenodoxin/ferredoxin). The chain is Cholesterol side-chain cleavage enzyme, mitochondrial (CYP11A1) from Equus caballus (Horse).